Here is a 184-residue protein sequence, read N- to C-terminus: MSWRSESIWIEFITGSRKTSNFCWAFILFLGSLGFLLVGTSSYLGRNVISLFPSQQIIFFPQGIVMSFYGIAGLFISCYLWCTILWNVGSGYDLFDRKEGIVRIFRWGFPGKSRRIFLRFFMKDIQSIRIEVKEGVSARRVLYMEIRGQGAIPLIRTDENFTTREIEQKAAELAYFLRVPIEVF.

The next 2 helical transmembrane spans lie at 22–42 (FCWAFILFLGSLGFLLVGTSS) and 57–77 (IIFFPQGIVMSFYGIAGLFIS).

It belongs to the Ycf4 family.

Its subcellular location is the plastid. The protein localises to the chloroplast thylakoid membrane. In terms of biological role, seems to be required for the assembly of the photosystem I complex. The sequence is that of Photosystem I assembly protein Ycf4 from Crucihimalaya wallichii (Rock-cress).